The sequence spans 353 residues: Probable peptidoglycan glycosyltransferase FtsW (353 aa).

The next 8 helical transmembrane spans lie at 26–46 (IFYFFLIFLLSFILLRIPMSF), 53–73 (LILIISIFLLTIVLLIGKSVH), 115–135 (FWGFLKPITIIIIQSVLLLAE), 137–157 (DLGTVIVLFLTTLSVLFLSGV), 162–182 (FFIIIFFVTLIITALVLFEPY), 242–262 (IIGEELGYIGCFLILLMIFFI), 288–308 (IGLWFSFQTLINIGAVTGILP), and 314–334 (LPLISYGGSSLIVNLMAICIL).

This sequence belongs to the SEDS family. FtsW subfamily.

It localises to the cell inner membrane. The enzyme catalyses [GlcNAc-(1-&gt;4)-Mur2Ac(oyl-L-Ala-gamma-D-Glu-L-Lys-D-Ala-D-Ala)](n)-di-trans,octa-cis-undecaprenyl diphosphate + beta-D-GlcNAc-(1-&gt;4)-Mur2Ac(oyl-L-Ala-gamma-D-Glu-L-Lys-D-Ala-D-Ala)-di-trans,octa-cis-undecaprenyl diphosphate = [GlcNAc-(1-&gt;4)-Mur2Ac(oyl-L-Ala-gamma-D-Glu-L-Lys-D-Ala-D-Ala)](n+1)-di-trans,octa-cis-undecaprenyl diphosphate + di-trans,octa-cis-undecaprenyl diphosphate + H(+). Its pathway is cell wall biogenesis; peptidoglycan biosynthesis. Functionally, peptidoglycan polymerase that is essential for cell division. The chain is Probable peptidoglycan glycosyltransferase FtsW from Buchnera aphidicola subsp. Schizaphis graminum (strain Sg).